The chain runs to 201 residues: ATP-dependent Clp protease proteolytic subunit (201 aa).

Catalysis depends on serine 97, which acts as the Nucleophile. Histidine 122 is a catalytic residue.

Belongs to the peptidase S14 family. In terms of assembly, fourteen ClpP subunits assemble into 2 heptameric rings which stack back to back to give a disk-like structure with a central cavity, resembling the structure of eukaryotic proteasomes.

It is found in the cytoplasm. It catalyses the reaction Hydrolysis of proteins to small peptides in the presence of ATP and magnesium. alpha-casein is the usual test substrate. In the absence of ATP, only oligopeptides shorter than five residues are hydrolyzed (such as succinyl-Leu-Tyr-|-NHMec, and Leu-Tyr-Leu-|-Tyr-Trp, in which cleavage of the -Tyr-|-Leu- and -Tyr-|-Trp bonds also occurs).. Functionally, cleaves peptides in various proteins in a process that requires ATP hydrolysis. Has a chymotrypsin-like activity. Plays a major role in the degradation of misfolded proteins. The chain is ATP-dependent Clp protease proteolytic subunit from Nitratidesulfovibrio vulgaris (strain DSM 19637 / Miyazaki F) (Desulfovibrio vulgaris).